A 281-amino-acid polypeptide reads, in one-letter code: Spermatogenesis-associated serine-rich protein 1 (281 aa).

Over residues 1 to 14 (MEAARDAQHSDVLE) the composition is skewed to basic and acidic residues. The interval 1–92 (MEAARDAQHS…SSSAQANRSL (92 aa)) is disordered. Polar residues predominate over residues 21–37 (SRTSSHQNRRASLSSDG). Thr-53 bears the Phosphothreonine mark. A compositionally biased stretch (polar residues) spans 54 to 65 (PSDTASGLGQKT). The span at 66-85 (SSTSSSSSSSSSSSPSSSSS) shows a compositional bias: low complexity. Phosphoserine occurs at positions 71, 74, 77, 78, 79, and 91.

As to expression, detected in pachytene spermatocytes and round spermatids.

The polypeptide is Spermatogenesis-associated serine-rich protein 1 (Spats1) (Rattus norvegicus (Rat)).